We begin with the raw amino-acid sequence, 378 residues long: GTP cyclohydrolase-2 (378 aa).

The interval 1–180 (MEEVSSHVKS…IKDMIEFRIK (180 aa)) is DHBP synthase-like. Positions 181-378 (SEKIVERVIE…KMGHLICFND (198 aa)) are GTP cyclohydrolase II. 229–233 (RIHSE) is a GTP binding site. Cysteine 234, cysteine 245, and cysteine 247 together coordinate Zn(2+). GTP-binding positions include glutamine 250, 273 to 275 (EGR), and threonine 295. Aspartate 307 acts as the Proton acceptor in catalysis. Arginine 309 acts as the Nucleophile in catalysis. Residues threonine 330 and lysine 335 each coordinate GTP.

The protein in the N-terminal section; belongs to the DHBP synthase family. In the C-terminal section; belongs to the GTP cyclohydrolase II family. Zn(2+) is required as a cofactor.

The catalysed reaction is GTP + 4 H2O = 2,5-diamino-6-hydroxy-4-(5-phosphoribosylamino)-pyrimidine + formate + 2 phosphate + 3 H(+). The protein operates within cofactor biosynthesis; riboflavin biosynthesis; 5-amino-6-(D-ribitylamino)uracil from GTP: step 1/4. Functionally, catalyzes the conversion of GTP to 2,5-diamino-6-ribosylamino-4(3H)-pyrimidinone 5'-phosphate (DARP), formate and pyrophosphate. In Archaeoglobus fulgidus (strain ATCC 49558 / DSM 4304 / JCM 9628 / NBRC 100126 / VC-16), this protein is GTP cyclohydrolase-2 (ribA).